Reading from the N-terminus, the 337-residue chain is Monoacylglycerol lipase abhd6-A (337 aa).

The Extracellular segment spans residues 1–19; that stretch reads MDLDVLNMFLVAGGTLLVP. The chain crosses the membrane as a helical; Signal-anchor for type II membrane protein span at residues 20 to 42; the sequence is ILAFVTSFLLWPAALIKIYYWYW. Residues 43-337 lie on the Cytoplasmic side of the membrane; it reads RRALGMQVKF…QSTENNKKHE (295 aa). Residues 73-313 form the AB hydrolase-1 domain; sequence SVLMLHGFSA…CGHSVVMERP (241 aa). Serine 148 functions as the Nucleophile in the catalytic mechanism. Residues aspartate 278 and histidine 306 each act as charge relay system in the active site.

The protein belongs to the AB hydrolase superfamily.

The protein localises to the late endosome membrane. It localises to the lysosome membrane. Its subcellular location is the mitochondrion membrane. The enzyme catalyses Hydrolyzes glycerol monoesters of long-chain fatty acids.. It carries out the reaction 1-octanoylglycerol + H2O = octanoate + glycerol + H(+). It catalyses the reaction 1-decanoylglycerol + H2O = decanoate + glycerol + H(+). The catalysed reaction is 1-dodecanoylglycerol + H2O = dodecanoate + glycerol + H(+). The enzyme catalyses 1-tetradecanoylglycerol + H2O = tetradecanoate + glycerol + H(+). It carries out the reaction 2-hexadecanoylglycerol + H2O = glycerol + hexadecanoate + H(+). It catalyses the reaction 2-(9Z-octadecenoyl)-glycerol + H2O = glycerol + (9Z)-octadecenoate + H(+). The catalysed reaction is 1-(9Z-octadecenoyl)-glycerol + H2O = glycerol + (9Z)-octadecenoate + H(+). The enzyme catalyses 2-(9Z,12Z-octadecadienoyl)-glycerol + H2O = (9Z,12Z)-octadecadienoate + glycerol + H(+). It carries out the reaction 2-(5Z,8Z,11Z,14Z-eicosatetraenoyl)-glycerol + H2O = glycerol + (5Z,8Z,11Z,14Z)-eicosatetraenoate + H(+). It catalyses the reaction 1-(5Z,8Z,11Z,14Z-eicosatetraenoyl)-glycerol + H2O = glycerol + (5Z,8Z,11Z,14Z)-eicosatetraenoate + H(+). The catalysed reaction is 1-(9Z,12Z-octadecadienoyl)-glycerol + H2O = (9Z,12Z)-octadecadienoate + glycerol + H(+). The enzyme catalyses 3-(9Z-octadecenoyl)-sn-glycero-1-phospho-(3'-(9Z-octadecenoyl)-1'-sn-glycerol) + H2O = 3-(9Z-octadecenoyl)-sn-glycero-1-phospho-(1'-sn-glycerol) + (9Z)-octadecenoate + H(+). It carries out the reaction (S,S)-2-(9Z-octadecenoyl)-sn-glycero-1-phospho-(2'-(9Z-octadecenoyl)-1'-sn-glycerol) + H2O = (S,S)-2-(9Z-octadecenoyl)-sn-glycero-1-phospho-(1'-sn-glycerol) + (9Z)-octadecenoate + H(+). It catalyses the reaction (R,R)-2-(9Z-octadecenoyl)-sn-glycero-3-phospho-(2'-(9Z-octadecenoyl)-3'-sn-glycerol) + H2O = (R,R)-2-(9Z-octadecenoyl)-sn-glycero-3-phospho-(3'-sn-glycerol) + (9Z)-octadecenoate + H(+). Functionally, lipase that preferentially hydrolysis medium-chain saturated monoacylglycerols including 2-arachidonoylglycerol. Through 2-arachidonoylglycerol degradation may regulate endocannabinoid signaling pathways. Also has a lysophosphatidyl lipase activity with a preference for lysophosphatidylglycerol among other lysophospholipids. Also able to degrade bis(monoacylglycero)phosphate (BMP) and constitutes the major enzyme for BMP catabolism. BMP, also known as lysobisphosphatidic acid, is enriched in late endosomes and lysosomes and plays a key role in the formation of intraluminal vesicles and in lipid sorting. The sequence is that of Monoacylglycerol lipase abhd6-A (abhd6-a) from Xenopus laevis (African clawed frog).